Consider the following 236-residue polypeptide: (5-formylfuran-3-yl)methyl phosphate synthase (236 aa).

Lys-27 functions as the Schiff-base intermediate with substrate in the catalytic mechanism. The active-site Proton acceptor is the Lys-85.

Belongs to the MfnB family.

It carries out the reaction 2 D-glyceraldehyde 3-phosphate = 4-(hydroxymethyl)-2-furancarboxaldehyde phosphate + phosphate + 2 H2O. It participates in cofactor biosynthesis; methanofuran biosynthesis. Catalyzes the formation of 4-(hydroxymethyl)-2-furancarboxaldehyde phosphate (4-HFC-P) from two molecules of glyceraldehyde-3-P (GA-3-P). This chain is (5-formylfuran-3-yl)methyl phosphate synthase, found in Methanococcus maripaludis (strain C5 / ATCC BAA-1333).